Consider the following 449-residue polypeptide: Naphthalene 1,2-dioxygenase system, large oxygenase component (449 aa).

The Rieske domain maps to 39 to 137; it reads WLFLTHDSLI…LNKKCLGLKE (99 aa). [2Fe-2S] cluster contacts are provided by Cys81, His83, Cys101, and His104. Residues His208, His213, and Asp362 each contribute to the Fe cation site.

The protein belongs to the bacterial ring-hydroxylating dioxygenase alpha subunit family. As to quaternary structure, the naphthalene dioxygenase (NDO) multicomponent enzyme system is composed of an electron transfer component and a dioxygenase component (iron sulfur protein (ISP)). The electron transfer component is composed of a ferredoxin reductase (NdoR) and a ferredoxin (NdoA), and the dioxygenase component is formed of a heterohexamer (trimer of heterodimers) of three large alpha subunits (NdoB) and three small beta subunits (NdoC). Requires [2Fe-2S] cluster as cofactor. Fe(2+) serves as cofactor.

It catalyses the reaction naphthalene + NADH + O2 + H(+) = (1R,2S)-1,2-dihydronaphthalene-1,2-diol + NAD(+). Its pathway is aromatic compound metabolism; naphthalene degradation. Its function is as follows. Component of the naphthalene dioxygenase (NDO) multicomponent enzyme system which catalyzes the incorporation of both atoms of molecular oxygen into naphthalene to form cis-(1R,2S)-dihydroxy-1,2-dihydronaphthalene. The alpha subunit has a catalytic role in the holoenzyme. The chain is Naphthalene 1,2-dioxygenase system, large oxygenase component from Pseudomonas fluorescens.